A 122-amino-acid chain; its full sequence is UPF0102 protein Mpe_A3766 (122 aa).

It belongs to the UPF0102 family.

This Methylibium petroleiphilum (strain ATCC BAA-1232 / LMG 22953 / PM1) protein is UPF0102 protein Mpe_A3766.